A 148-amino-acid polypeptide reads, in one-letter code: Ribonuclease pancreatic (148 aa).

Residues 1 to 25 (MGLEKSLILLPLLVLVFGWVQPSLG) form the signal peptide. 2 residues coordinate substrate: K32 and R35. H37 acts as the Proton acceptor in catalysis. 4 cysteine pairs are disulfide-bonded: C50–C108, C64–C119, C82–C134, and C89–C96. Residue N58 is glycosylated (N-linked (GlcNAc...) asparagine). Position 65-69 (65-69 (KPVNT)) interacts with substrate. N-linked (GlcNAc...) asparagine glycosylation occurs at N86. Substrate-binding residues include K90 and R109. The active-site Proton donor is H143.

It belongs to the pancreatic ribonuclease family. Monomer. Interacts with and forms tight 1:1 complexes with RNH1. Dimerization of two such complexes may occur. Interaction with RNH1 inhibits this protein. In terms of tissue distribution, pancreas.

It localises to the secreted. It carries out the reaction an [RNA] containing cytidine + H2O = an [RNA]-3'-cytidine-3'-phosphate + a 5'-hydroxy-ribonucleotide-3'-[RNA].. It catalyses the reaction an [RNA] containing uridine + H2O = an [RNA]-3'-uridine-3'-phosphate + a 5'-hydroxy-ribonucleotide-3'-[RNA].. Its function is as follows. Endonuclease that catalyzes the cleavage of RNA on the 3' side of pyrimidine nucleotides. Acts on single-stranded and double-stranded RNA. The chain is Ribonuclease pancreatic (RNASE1) from Myodes glareolus (Bank vole).